Reading from the N-terminus, the 152-residue chain is Methylglyoxal synthase (152 aa).

The region spanning 6 to 152 is the MGS-like domain; it reads RTIPAQKHIA…YQRYLQDRLK (147 aa). Residues His19, Lys23, 45–48, and 65–66 contribute to the substrate site; these read TGTT and SG. The active-site Proton donor/acceptor is Asp71. Substrate is bound at residue His98.

Belongs to the methylglyoxal synthase family.

It catalyses the reaction dihydroxyacetone phosphate = methylglyoxal + phosphate. Catalyzes the formation of methylglyoxal from dihydroxyacetone phosphate. The protein is Methylglyoxal synthase of Pectobacterium atrosepticum (strain SCRI 1043 / ATCC BAA-672) (Erwinia carotovora subsp. atroseptica).